A 175-amino-acid chain; its full sequence is Nucleoside diphosphate kinase 6 (175 aa).

Residues Lys15, Phe63, Arg91, Thr97, Arg111, and Asn121 each contribute to the ATP site. The Pros-phosphohistidine intermediate role is filled by His124.

This sequence belongs to the NDK family. It depends on Mg(2+) as a cofactor.

The catalysed reaction is a 2'-deoxyribonucleoside 5'-diphosphate + ATP = a 2'-deoxyribonucleoside 5'-triphosphate + ADP. It carries out the reaction a ribonucleoside 5'-diphosphate + ATP = a ribonucleoside 5'-triphosphate + ADP. Its function is as follows. Major role in the synthesis of nucleoside triphosphates other than ATP. The ATP gamma phosphate is transferred to the NDP beta phosphate via a ping-pong mechanism, using a phosphorylated active-site intermediate. The polypeptide is Nucleoside diphosphate kinase 6 (nme6) (Danio rerio (Zebrafish)).